Here is a 497-residue protein sequence, read N- to C-terminus: Sestrin homolog (497 aa).

Residues Ser185 and Ser190 each carry the phosphoserine modification. Polar residues predominate over residues 226 to 241; the sequence is NANPDYDSQTAASSNG. The disordered stretch occupies residues 226–255; the sequence is NANPDYDSQTAASSNGGAPPDSANAVADGP.

Belongs to the sestrin family. As to quaternary structure, associates with the GATOR2 complex; the interaction is probably direct. Associates with the GATOR1 complex; the interaction is probably indirect and mediated by the GATOR2 complex. In terms of tissue distribution, highly expressed in muscle-enriched tissues (at protein level).

It localises to the nucleus. The protein resides in the cytoplasm. Functionally, functions as a negative feedback regulator of mTOR function. This is Sestrin homolog from Drosophila melanogaster (Fruit fly).